Reading from the N-terminus, the 1893-residue chain is MNFKGVKLLKNSKKRLDFLPNTLNKYSIRKFTVGTASILVGATLFLGVSNEAEAAEKIDSPTKEKVATTEEAATKEEAATTEEPATKEEAATTEEPATKEEAAIAEEPATKEEAATTEEPATKEEAAIAEEPATKEEAATTEEPATKEEAATTEEPATKEEAAIAEEPATKEEAATTEEPATKEEAAIAEEPATKEEAVTSEEAATKEKAAIAEEPATKEEAAIAEEPETKEEAATTEEPATKEEAAIAEEAATKEKAVTSEEAATKEKAAIAEEAATKEKAAIAEEPETKEEAATTEEPETKEEAAIAEEPATKEKAVTSEEAHGINNKNKQLLDMDKNSTIDEKFDYAKQAINELNINQKDISNIEASIKNNSDLKNLSKEELNNEILRAALVNESNNNDYGLQTLSAIEPLTTNVRNKNNSLSPVSRLKMLATATSGQNVNDKINITNASLTLNQKNNQHDDNTVWPTSNEQLRLSADYELDNSIKEGDTFTIKYGDYIRPGALELPAKNTQLRSKEGSIVANGVYDENTTTTTYTFTNYVDQYQNITGSFNLLATPKRETVTTDKQTYPMNVTIANQEVSENFVVDYGNHEDHLTNAAVVNVDNVNNQHNEVVYLNQSGDRIYDAKYFSIVQNGTFIPNEVKVYEVLDDNVLVDSFNPDLNGPAVKDVTSEFTPQYSLNNTRVDIDLNRSNMNKGSRYIITQAVKPSGTGNVNTTYELTRYGNEASRYPTGTKSTTVSYINGSSTAQGDNPTYNLGDYVWLDKNKDGIQNDDEKGISGVYVILKDSNNKELQRATTDDTGRYQFNNLQNGTYNVEFVIPNNYTPSPSNTIDNDTIDSDGQKDGDSNVVVAKGTINNADNMTVDTGFYETPKYSLGDYVWKDTNKDGVQDSDEKGIQGVTVTLKDKNGNVLKTTTTDENGSYRFDNLDSGDYIVHFEKPEGLTQTTTNSDSDENKDADGEEVHVTITDHDDFSIDNGYFDEDSDADADSDADADSDADADADADSDADADADADSDADSDADADADSDADADADADADSDSDADADADADADSDADADADSDADADADADSDADADADSDADSDADADADSDADADADADADSDADADSDADADADADADSDADADADADSDADADSDSDADADADADSDADADADADSDADADADSDADADADSDADADADSDADSDADADADSDADADADADADSDADADADSDADADADADADSDADSDADSDADSDADADADSDADADADADADSDADADSDADADSDADADADADADSDADADSDADADSDADADSDADADADADSDADADADADSDADADADSDSDADADADADSDADADADADSDADADSDADADSDADADADADSDADADSDADADADADSDADADADSDADADADADSDADADSDADADADADADSDADADADADSDADADADADADADSDADADADSDADADADSDADSDADADADSDADADADADSDADADSDADADSDADADSDADADADADSDADADSDADADSDADADADADSDADADSDADADADSDADADADSDADADSDADADADADADSDADADSDADSDADADADSDSDADADADADSDADADADADSDADADSDADADADSDSDADADADADSDADADSDADADADADSDADADADSDADADADSDADADADSDADSDADADADSDADADADADSDADADSDADADADADSDADADSDADADADADSDADADSDADADSDADADSDADADSDADADSDADADADADSDADADSDADADADADSDADADADSDADADADSDADADADSDADADADSDADADADSDADKYHNDTADKSNDNELPDTGNNTQNNGTLFGSLFAALGGLFLVGSRRKNKNNEEK.

The signal sequence occupies residues 1-54 (MNFKGVKLLKNSKKRLDFLPNTLNKYSIRKFTVGTASILVGATLFLGVSNEAEA). The tract at residues 53–333 (EAAEKIDSPT…AHGINNKNKQ (281 aa)) is disordered. The segment covering 54-222 (AAEKIDSPTK…AEEPATKEEA (169 aa)) has biased composition (basic and acidic residues). A run of 21 repeats spans residues 72-83 (AATKEEAATTEE), 84-95 (PATKEEAATTEE), 96-107 (PATKEEAAIAEE), 108-119 (PATKEEAATTEE), 120-131 (PATKEEAAIAEE), 132-143 (PATKEEAATTEE), 144-155 (PATKEEAATTEE), 156-167 (PATKEEAAIAEE), 168-179 (PATKEEAATTEE), 180-191 (PATKEEAAIAEE), 192-203 (PATKEEAVTSEE), 204-215 (AATKEKAAIAEE), 216-227 (PATKEEAAIAEE), 228-239 (PETKEEAATTEE), 240-251 (PATKEEAAIAEE), 252-263 (AATKEKAVTSEE), 264-275 (AATKEKAAIAEE), 276-287 (AATKEKAAIAEE), 288-299 (PETKEEAATTEE), 300-311 (PETKEEAAIAEE), and 312-323 (PATKEKAVTSEE). The interval 72-323 (AATKEEAATT…TKEKAVTSEE (252 aa)) is 21 X 12 AA tandem repeat of [AP]-[AE]-T-K-E-[EK]-A-[AV]-[IT]-[AST]-E-E. Over residues 240-284 (PATKEEAAIAEEAATKEKAVTSEEAATKEKAAIAEEAATKEKAAI) the composition is skewed to basic and acidic residues. Residues 286-302 (EEPETKEEAATTEEPET) show a composition bias toward acidic residues. The segment covering 312-325 (PATKEKAVTSEEAH) has biased composition (basic and acidic residues). Positions 324 to 755 (AHGINNKNKQ…GSSTAQGDNP (432 aa)) are ligand binding A region. CNA-B domains lie at 756–874 (TYNL…YETP) and 875–984 (KYSL…YFDE). The interval 941 to 1867 (KPEGLTQTTT…GNNTQNNGTL (927 aa)) is disordered. The segment covering 955-975 (DENKDADGEEVHVTITDHDDF) has biased composition (basic and acidic residues). Acidic residues predominate over residues 981-1836 (YFDEDSDADA…DSDADADADS (856 aa)). Residues 1837 to 1851 (DADKYHNDTADKSND) show a composition bias toward basic and acidic residues. An LPXTG sorting signal motif is present at residues 1854–1858 (LPDTG). Thr-1857 is subject to Pentaglycyl murein peptidoglycan amidated threonine. A propeptide spans 1858-1893 (GNNTQNNGTLFGSLFAALGGLFLVGSRRKNKNNEEK) (removed by sortase).

Belongs to the serine-aspartate repeat-containing protein (SDr) family.

The protein resides in the secreted. It localises to the cell wall. Functionally, responsible for collagen binding by S.saprophyticus. The polypeptide is Serine-aspartate repeat-containing protein I (sdrI) (Staphylococcus saprophyticus).